A 154-amino-acid chain; its full sequence is Protein E6 (154 aa).

Zinc fingers lie at residues 30–66 (CIFCNSILQTAEVLAFAFRELYVVWRNDFPFAACVKC) and 103–139 (CCKCHKPLSPVEKTNHIVKKTQFFKLQDSWTGYCLHC).

This sequence belongs to the papillomaviridae E6 protein family. Forms homodimers. Interacts with ubiquitin-protein ligase UBE3A/E6-AP; this interaction stimulates UBE3A ubiquitin activity. Interacts with host TP53 and EP300; this interaction inhibits TP53 activity.

Its subcellular location is the host cytoplasm. The protein resides in the host nucleus. Functionally, plays a major role in the induction and maintenance of cellular transformation. E6 associates with host UBE3A/E6-AP ubiquitin-protein ligase and modulates its activity. Sequesters tumor suppressor TP53 in the host cytoplasm and modulates its activity by interacting with host EP300 that results in the reduction of TP53 acetylation and activation. In turn, apoptosis induced by DNA damage is inhibited. E6 also protects host keratinocytes from apoptosis by mediating the degradation of host BAK1. May also inhibit host immune response. The protein is Protein E6 of Human papillomavirus 7.